We begin with the raw amino-acid sequence, 335 residues long: NADH-quinone oxidoreductase subunit H (335 aa).

Helical transmembrane passes span isoleucine 12–leucine 32, valine 81–isoleucine 101, isoleucine 114–glycine 134, valine 154–phenylalanine 174, leucine 187–valine 207, phenylalanine 238–phenylalanine 258, serine 270–leucine 290, and tryptophan 307–leucine 327.

This sequence belongs to the complex I subunit 1 family. In terms of assembly, NDH-1 is composed of 13 different subunits. Subunits NuoA, H, J, K, L, M, N constitute the membrane sector of the complex.

It is found in the cell inner membrane. It catalyses the reaction a quinone + NADH + 5 H(+)(in) = a quinol + NAD(+) + 4 H(+)(out). In terms of biological role, NDH-1 shuttles electrons from NADH, via FMN and iron-sulfur (Fe-S) centers, to quinones in the respiratory chain. The immediate electron acceptor for the enzyme in this species is believed to be ubiquinone. Couples the redox reaction to proton translocation (for every two electrons transferred, four hydrogen ions are translocated across the cytoplasmic membrane), and thus conserves the redox energy in a proton gradient. This subunit may bind ubiquinone. The protein is NADH-quinone oxidoreductase subunit H of Pseudomonas syringae pv. tomato (strain ATCC BAA-871 / DC3000).